The chain runs to 513 residues: Cytochrome P450 94A2 (513 aa).

A helical membrane pass occupies residues 7 to 24 (ISWLLFSTSLFWFLFLAT). Cys-455 contacts heme.

The protein belongs to the cytochrome P450 family. Heme is required as a cofactor. Weakly expressed in seedlings.

It localises to the endoplasmic reticulum membrane. In terms of biological role, catalyzes the omega-hydroxylation of various fatty acids (FA). The substrate specificity is higher for myristate &gt; laurate = palmitate (C14&gt;C16=C12). The protein is Cytochrome P450 94A2 (CYP94A2) of Vicia sativa (Spring vetch).